The primary structure comprises 340 residues: HTH-type transcriptional repressor PurR (340 aa).

An HTH lacI-type domain is found at 2 to 56 (ATIKDVAKLVGVSTTTVSHVINKTRFVAEDTTKAVWEAIASLNYSPSAVARSLKV). Residues 4-23 (IKDVAKLVGVSTTTVSHVIN) constitute a DNA-binding region (H-T-H motif). Residues 48–56 (SAVARSLKV) mediate DNA binding. Hypoxanthine is bound by residues Tyr73, Lys188, Thr190, Phe219, and Asp273.

Homodimer.

Its pathway is purine metabolism; purine nucleotide biosynthesis [regulation]. Functionally, is the main repressor of the genes involved in the de novo synthesis of purine nucleotides, regulating purB, purC, purEK, purF, purHD, purL, purMN and guaBA expression. PurR is allosterically activated to bind its cognate DNA by binding the purine corepressors, hypoxanthine or guanine, thereby effecting transcription repression. The protein is HTH-type transcriptional repressor PurR of Glaesserella parasuis serovar 5 (strain SH0165) (Haemophilus parasuis).